Consider the following 406-residue polypeptide: Tryptophan synthase beta chain (406 aa).

An N6-(pyridoxal phosphate)lysine modification is found at Lys99.

The protein belongs to the TrpB family. As to quaternary structure, tetramer of two alpha and two beta chains. Pyridoxal 5'-phosphate is required as a cofactor.

The catalysed reaction is (1S,2R)-1-C-(indol-3-yl)glycerol 3-phosphate + L-serine = D-glyceraldehyde 3-phosphate + L-tryptophan + H2O. The protein operates within amino-acid biosynthesis; L-tryptophan biosynthesis; L-tryptophan from chorismate: step 5/5. Functionally, the beta subunit is responsible for the synthesis of L-tryptophan from indole and L-serine. The sequence is that of Tryptophan synthase beta chain from Methylobacterium nodulans (strain LMG 21967 / CNCM I-2342 / ORS 2060).